We begin with the raw amino-acid sequence, 698 residues long: Elongation factor G (698 aa).

Positions 8-290 constitute a tr-type G domain; the sequence is ERYRNIGISA…AVIEFLPSPV (283 aa). Residues 17 to 24, 88 to 92, and 142 to 145 each bind GTP; these read AHIDAGKT, DTPGH, and NKMD.

This sequence belongs to the TRAFAC class translation factor GTPase superfamily. Classic translation factor GTPase family. EF-G/EF-2 subfamily.

Its subcellular location is the cytoplasm. Functionally, catalyzes the GTP-dependent ribosomal translocation step during translation elongation. During this step, the ribosome changes from the pre-translocational (PRE) to the post-translocational (POST) state as the newly formed A-site-bound peptidyl-tRNA and P-site-bound deacylated tRNA move to the P and E sites, respectively. Catalyzes the coordinated movement of the two tRNA molecules, the mRNA and conformational changes in the ribosome. The polypeptide is Elongation factor G (Azoarcus sp. (strain BH72)).